Here is a 201-residue protein sequence, read N- to C-terminus: Small ribosomal subunit protein uS4 (201 aa).

A disordered region spans residues 28–47 (KKNYPPGQHGNSRKRKTSEY). Positions 92–155 (GRLDNIVFRL…KSLEVIANSL (64 aa)) constitute an S4 RNA-binding domain.

It belongs to the universal ribosomal protein uS4 family. In terms of assembly, part of the 30S ribosomal subunit. Contacts protein S5. The interaction surface between S4 and S5 is involved in control of translational fidelity.

Its function is as follows. One of the primary rRNA binding proteins, it binds directly to 16S rRNA where it nucleates assembly of the body of the 30S subunit. In terms of biological role, with S5 and S12 plays an important role in translational accuracy. This is Small ribosomal subunit protein uS4 from Bacteroides fragilis (strain YCH46).